The following is a 579-amino-acid chain: Aspartate--tRNA(Asp/Asn) ligase (579 aa).

E171 contributes to the L-aspartate binding site. Positions 195–198 are aspartate; sequence QLFK. R217 contributes to the L-aspartate binding site. ATP-binding positions include 217-219 and Q226; that span reads RDE. Residue H444 coordinates L-aspartate. E475 contacts ATP. R482 contacts L-aspartate. 527-530 provides a ligand contact to ATP; the sequence is GLDR.

It belongs to the class-II aminoacyl-tRNA synthetase family. Type 1 subfamily. As to quaternary structure, homodimer.

The protein resides in the cytoplasm. The enzyme catalyses tRNA(Asx) + L-aspartate + ATP = L-aspartyl-tRNA(Asx) + AMP + diphosphate. Aspartyl-tRNA synthetase with relaxed tRNA specificity since it is able to aspartylate not only its cognate tRNA(Asp) but also tRNA(Asn). Reaction proceeds in two steps: L-aspartate is first activated by ATP to form Asp-AMP and then transferred to the acceptor end of tRNA(Asp/Asn). This Thermotoga neapolitana (strain ATCC 49049 / DSM 4359 / NBRC 107923 / NS-E) protein is Aspartate--tRNA(Asp/Asn) ligase.